The sequence spans 402 residues: Deoxyguanosinetriphosphate triphosphohydrolase-like protein (402 aa).

The disordered stretch occupies residues 20 to 39 (PAFSRGRLVPEPESPTRTPF). The HD domain occupies 73–217 (RLTHTIEVAQ…AAIADDIAYN (145 aa)).

Belongs to the dGTPase family. Type 2 subfamily.

The sequence is that of Deoxyguanosinetriphosphate triphosphohydrolase-like protein from Brucella ovis (strain ATCC 25840 / 63/290 / NCTC 10512).